Consider the following 417-residue polypeptide: Tol-Pal system protein TolB (417 aa).

A signal peptide spans 1–16 (MRYLWLFLIGTIGLFA).

The protein belongs to the TolB family. In terms of assembly, the Tol-Pal system is composed of five core proteins: the inner membrane proteins TolA, TolQ and TolR, the periplasmic protein TolB and the outer membrane protein Pal. They form a network linking the inner and outer membranes and the peptidoglycan layer.

The protein localises to the periplasm. In terms of biological role, part of the Tol-Pal system, which plays a role in outer membrane invagination during cell division and is important for maintaining outer membrane integrity. The sequence is that of Tol-Pal system protein TolB from Helicobacter pylori (strain HPAG1).